A 414-amino-acid chain; its full sequence is Sensor protein CutS (414 aa).

Residues 1-15 are compositionally biased toward pro residues; the sequence is MATTPAPPGAPPKPT. Positions 1–21 are disordered; that stretch reads MATTPAPPGAPPKPTWDPRSA. The next 2 helical transmembrane spans lie at 37–57 and 121–141; these read LLYGGMFLIAGILLLSIIYLL and SLLALLGLAVIAFAFGYAMAG. Positions 142-194 constitute an HAMP domain; it reads RVLSPLGRITRTARAVAGSDLSRRIELDGPDDELKELADTFDDMLERLQRAFT. The Histidine kinase domain occupies 202 to 414; the sequence is NASHELRTPL…GLVMRVTLPV (213 aa). At His205 the chain carries Phosphohistidine; by autocatalysis.

The protein localises to the cell membrane. The enzyme catalyses ATP + protein L-histidine = ADP + protein N-phospho-L-histidine.. Member of the two-component regulatory system CutS/CutR, involved in the regulation of copper metabolism. The polypeptide is Sensor protein CutS (cutS) (Streptomyces coelicolor (strain ATCC BAA-471 / A3(2) / M145)).